We begin with the raw amino-acid sequence, 302 residues long: GLABROUS1 enhancer-binding protein (302 aa).

2 disordered regions span residues 1-55 (MVTP…MKKK) and 158-229 (GQGD…NDDD). Serine 27 carries the phosphoserine modification. Residues 180-195 (RTNESGEEMLKEHEEE) show a composition bias toward basic and acidic residues. The span at 208–217 (AKTTENGTSS) shows a compositional bias: polar residues. A non-canonical leucine-zipper region spans residues 270 to 291 (LSDEWKALCVEETRFNIKKLRF).

The protein belongs to the GeBP family. As to quaternary structure, homo- and heterodimers. Interacts with GPL1, GPL2 and GPL3. Interacts with KIN10, KIN11 and FLZ4. Interacts with KIN10 and KIN11 via its N-terminal part. Interacts with GPL1 and GPL3 via its C-terminal part. In terms of tissue distribution, expressed in the apical meristem and young leaf primordia. Not detected in emerging or mature leaves. Detected in the vascular tissues of cotyledons and leaves, in hydathodes and at the base of flowers and siliques, but not in roots.

The protein localises to the nucleus. The protein resides in the nucleolus. Its function is as follows. DNA-binding protein, which specifically recognizes the GL1 enhancer sequence. May be involved in leaf initiation. May play redundant roles with GPL1 and GPL2 in cytokinin responses by regulating the transcript levels of type-A ARR response genes. Involved in stress responses. Plays a repressive role in cell expansion by counteracting the positive role of CPR5 in this process, but does not regulate cell proliferation or endoreduplication. May play a role in plant defense. The sequence is that of GLABROUS1 enhancer-binding protein from Arabidopsis thaliana (Mouse-ear cress).